The sequence spans 317 residues: D-alanine--D-alanine ligase (317 aa).

The region spanning 111 to 308 (KRFWNGIGIP…YASLVEKIAQ (198 aa)) is the ATP-grasp domain. 137-192 (EEQMSYPVIVKPSREGSTIGINKAMNRAELDDALIKALEYDSDILVEEFIDGPEFT) contacts ATP. D262, E275, and N277 together coordinate Mg(2+).

Belongs to the D-alanine--D-alanine ligase family. Requires Mg(2+) as cofactor. Mn(2+) is required as a cofactor.

The protein localises to the cytoplasm. The catalysed reaction is 2 D-alanine + ATP = D-alanyl-D-alanine + ADP + phosphate + H(+). Its pathway is cell wall biogenesis; peptidoglycan biosynthesis. Its function is as follows. Cell wall formation. The protein is D-alanine--D-alanine ligase of Marinomonas sp. (strain MWYL1).